A 218-amino-acid polypeptide reads, in one-letter code: 25.3 kDa vesicle transport protein SEC22-1 (218 aa).

At 1–192 the chain is on the cytoplasmic side; it reads MVKMTLIARV…DKAKDLNRQA (192 aa). A Longin domain is found at 6-120; sequence LIARVTDGLP…YAFIKFDTFI (115 aa). A v-SNARE coiled-coil homology domain is found at 135–195; it reads NIAKLNDELY…KDLNRQALIR (61 aa). The chain crosses the membrane as a helical; Anchor for type IV membrane protein span at residues 193–213; that stretch reads LIRKWAPVAIVFGVVFLLFWV. The Vesicular segment spans residues 214 to 218; it reads KNKLW.

This sequence belongs to the synaptobrevin family. As to quaternary structure, interacts with SEC24A. Mainly expressed in flowers and siliques, to a lower extent in seedlings, and barely in roots and leaves.

The protein resides in the golgi apparatus membrane. It is found in the endoplasmic reticulum membrane. Functionally, V-SNARE involved in vesicle trafficking from the ER to the Golgi complex and required for early secretion. Involved in endoplasmic reticulum (ER) biogenesis and functions as well as for Golgi-stack integrity. Essential for gametophytes development. Involved in cesium Cs(+) accumulation, a non-essential cation. The protein is 25.3 kDa vesicle transport protein SEC22-1 of Arabidopsis thaliana (Mouse-ear cress).